A 333-amino-acid chain; its full sequence is MQISVNEFLTPRHIDVQVVSPTRAKITLEPLERGFGHTLGNALRRILLSSMPGCAVVEAEIDGVLHEYSAIEGVQEDVIEILLNLKGLAIKLHGRDEVTLTLSKKGSGVVTAADIQLDHDVEIVNPDHVIANLASNGALNMKLTVARGRGYEPADSRQTDEDESRSIGRLQLDASFSPVRRIAYVVENARVEQRTNLDKLVIDLETNGTLDPEEAIRRAATILQQQLAAFVDLKGDSEPVVVEQEDEIDPILLRPVDDLELTVRSANCLKAENIYYIGDLIQRTEVELLKTPNLGKKSLTEIKDVLASRGLSLGMRLDNWPPASLKKDDKATA.

The alpha N-terminal domain (alpha-NTD) stretch occupies residues 1-234; sequence MQISVNEFLT…QQLAAFVDLK (234 aa). The segment at 248–333 is alpha C-terminal domain (alpha-CTD); it reads IDPILLRPVD…SLKKDDKATA (86 aa).

Belongs to the RNA polymerase alpha chain family. In terms of assembly, homodimer. The RNAP catalytic core consists of 2 alpha, 1 beta, 1 beta' and 1 omega subunit. When a sigma factor is associated with the core the holoenzyme is formed, which can initiate transcription.

The catalysed reaction is RNA(n) + a ribonucleoside 5'-triphosphate = RNA(n+1) + diphosphate. DNA-dependent RNA polymerase catalyzes the transcription of DNA into RNA using the four ribonucleoside triphosphates as substrates. This is DNA-directed RNA polymerase subunit alpha from Pseudomonas entomophila (strain L48).